The sequence spans 179 residues: ATP synthase subunit delta (179 aa).

This sequence belongs to the ATPase delta chain family. F-type ATPases have 2 components, F(1) - the catalytic core - and F(0) - the membrane proton channel. F(1) has five subunits: alpha(3), beta(3), gamma(1), delta(1), epsilon(1). F(0) has three main subunits: a(1), b(2) and c(10-14). The alpha and beta chains form an alternating ring which encloses part of the gamma chain. F(1) is attached to F(0) by a central stalk formed by the gamma and epsilon chains, while a peripheral stalk is formed by the delta and b chains.

The protein resides in the cell membrane. In terms of biological role, f(1)F(0) ATP synthase produces ATP from ADP in the presence of a proton or sodium gradient. F-type ATPases consist of two structural domains, F(1) containing the extramembraneous catalytic core and F(0) containing the membrane proton channel, linked together by a central stalk and a peripheral stalk. During catalysis, ATP synthesis in the catalytic domain of F(1) is coupled via a rotary mechanism of the central stalk subunits to proton translocation. Its function is as follows. This protein is part of the stalk that links CF(0) to CF(1). It either transmits conformational changes from CF(0) to CF(1) or is implicated in proton conduction. This chain is ATP synthase subunit delta, found in Staphylococcus epidermidis (strain ATCC 35984 / DSM 28319 / BCRC 17069 / CCUG 31568 / BM 3577 / RP62A).